Consider the following 50-residue polypeptide: F420-non-reducing hydrogenase vhu subunit U (50 aa).

Ni(2+) is bound by residues selenocysteine 27 and cysteine 30. Position 27 (selenocysteine 27) is a non-standard amino acid, selenocysteine. The propeptide at 34–50 (IIVKDEKGNKIIEVIKE) is removed in mature form.

It belongs to the [NiFe]/[NiFeSe] hydrogenase large subunit family. The F420-non-reducing hydrogenase vhu is composed of four subunits; VhuA, VhuD, VhuG and VhuU. Ni(2+) is required as a cofactor.

The sequence is that of F420-non-reducing hydrogenase vhu subunit U (vhuU) from Methanocaldococcus jannaschii (strain ATCC 43067 / DSM 2661 / JAL-1 / JCM 10045 / NBRC 100440) (Methanococcus jannaschii).